Reading from the N-terminus, the 94-residue chain is uncharacterized protein (94 aa).

The protein to M.tuberculosis Rv2632c.

This is an uncharacterized protein from Mycobacterium tuberculosis (strain CDC 1551 / Oshkosh).